Consider the following 372-residue polypeptide: Alpha-1-antitrypsin homolog (372 aa).

The first 19 residues, M1–R19, serve as a signal peptide directing secretion. 2 N-linked (GlcNAc...) asparagine glycosylation sites follow: N214 and N226. An RCL region spans residues A328–R347.

The protein belongs to the serpin family.

The protein localises to the secreted. In Cyprinus carpio (Common carp), this protein is Alpha-1-antitrypsin homolog.